The chain runs to 388 residues: MRFITAGESHGPELTAIIEGLPAGLPLSSEEINRELARRQGGYGRGGRMKIEKDQVRITSGIRHGKTLGSPVTLIVENKDWKNWTSVMSVEPVPEKQKKIRRVSKPRPGHADLVGGMKYQHDDLRNVLERSSARETTMRVAIGAVAKKLLAELDIQVAGHVAVLGGIEATIPENLTIREIQERSEQSAVRVLDPSVEEKMKELIDQTKKNGDTIGGVVEVLVGGVPAGLGSYVQWDRKLDAKIAQAVVSINAFKGAEFGIGFEMAQRPGSQVMDEIVWDESTGYTRTSNNLGGFEGGMTNGMPIIVRGVMKPIPTLYKPLQSVNIDTKEPYKASVERSDSTAVPAASVVCEAVVATEVAKAMLEKFDSDSFEQMKEAVKRYRLYTQNF.

2 residues coordinate NADP(+): arginine 39 and arginine 45. The tract at residues 95-115 is disordered; sequence EKQKKIRRVSKPRPGHADLVG. Positions 98 to 108 are enriched in basic residues; that stretch reads KKIRRVSKPRP. FMN-binding positions include 130-132, 251-252, glycine 296, 311-315, and arginine 337; these read RSS, NA, and KPIPT.

Belongs to the chorismate synthase family. Homotetramer. FMNH2 is required as a cofactor.

It catalyses the reaction 5-O-(1-carboxyvinyl)-3-phosphoshikimate = chorismate + phosphate. Its pathway is metabolic intermediate biosynthesis; chorismate biosynthesis; chorismate from D-erythrose 4-phosphate and phosphoenolpyruvate: step 7/7. In terms of biological role, catalyzes the anti-1,4-elimination of the C-3 phosphate and the C-6 proR hydrogen from 5-enolpyruvylshikimate-3-phosphate (EPSP) to yield chorismate, which is the branch point compound that serves as the starting substrate for the three terminal pathways of aromatic amino acid biosynthesis. This reaction introduces a second double bond into the aromatic ring system. The protein is Chorismate synthase of Enterococcus faecalis (strain ATCC 700802 / V583).